A 277-amino-acid polypeptide reads, in one-letter code: Putative phosphoenolpyruvate synthase regulatory protein (277 aa).

ADP is bound at residue 157–164 (GVSRCGKT).

This sequence belongs to the pyruvate, phosphate/water dikinase regulatory protein family. PSRP subfamily.

The catalysed reaction is [pyruvate, water dikinase] + ADP = [pyruvate, water dikinase]-phosphate + AMP + H(+). It carries out the reaction [pyruvate, water dikinase]-phosphate + phosphate + H(+) = [pyruvate, water dikinase] + diphosphate. Bifunctional serine/threonine kinase and phosphorylase involved in the regulation of the phosphoenolpyruvate synthase (PEPS) by catalyzing its phosphorylation/dephosphorylation. The chain is Putative phosphoenolpyruvate synthase regulatory protein from Photobacterium profundum (strain SS9).